Reading from the N-terminus, the 136-residue chain is Ig kappa chain V-V region MOPC 21 (136 aa).

A signal peptide spans 1–29 (MHQTSMGIKMESHTLVFISILLCLYGADG). Positions 30-52 (NIVMTQSPKSMSMSVGERVTLTC) are framework-1. A complementarity-determining-1 region spans residues 53-63 (KASENVVTYVS). Positions 64 to 78 (WYQQKPEQSPKLLIY) are framework-2. A complementarity-determining-2 region spans residues 79–85 (GASNRYT). The tract at residues 86–117 (GVPDRFTGSGSATDFTLTISSVQAEDLADYHC) is framework-3. The complementarity-determining-3 stretch occupies residues 118-126 (GQGYSYPYT). The interval 127–136 (FGGGTKLEIK) is framework-4.

This chain is Ig kappa chain V-V region MOPC 21, found in Mus musculus (Mouse).